A 76-amino-acid chain; its full sequence is Small ribosomal subunit protein bS18 (76 aa).

It belongs to the bacterial ribosomal protein bS18 family. In terms of assembly, part of the 30S ribosomal subunit. Forms a tight heterodimer with protein bS6.

In terms of biological role, binds as a heterodimer with protein bS6 to the central domain of the 16S rRNA, where it helps stabilize the platform of the 30S subunit. This chain is Small ribosomal subunit protein bS18, found in Neisseria gonorrhoeae (strain ATCC 700825 / FA 1090).